Consider the following 483-residue polypeptide: Myosin-binding protein H (483 aa).

Positions 1 to 15 (MTGKATSEASVSTPE) are enriched in polar residues. Residues 1–78 (MTGKATSEAS…PEPPSEDVPS (78 aa)) are disordered. A phosphothreonine mark is found at Thr2, Thr6, and Thr26. Residues 41–66 (QEQAPEPQKPQAQDPAAPAASAMPAA) are compositionally biased toward low complexity. The Fibronectin type-III 1 domain occupies 79 to 174 (APLRLTLEDV…LDQPVHIQEI (96 aa)). Residues 178–266 (PKIRVPRHLR…EGLEAKASID (89 aa)) form the Ig-like C2-type 1 domain. Residues 275-370 (PPSSIKLLDV…TKELAHIHKA (96 aa)) enclose the Fibronectin type-III 2 domain. Residues 388–472 (PSFTQPLADH…INVLGEASVD (85 aa)) enclose the Ig-like C2-type 2 domain.

Belongs to the immunoglobulin superfamily. MyBP family. Skeletal muscle. Expressed at low levels in heart ventricles.

Its function is as follows. Binds to myosin; probably involved in interaction with thick myofilaments in the A-band. The chain is Myosin-binding protein H (Mybph) from Mus musculus (Mouse).